Here is a 357-residue protein sequence, read N- to C-terminus: Putative F-box/kelch-repeat protein At5g38680 (357 aa).

Positions 14–61 constitute an F-box domain; that stretch reads NSNPSLPDALIISCIARVSRLYYPILSFVSKSFRSLLASPELYKERSL. 4 Kelch repeats span residues 131-175, 177-224, 226-267, and 268-313; these read NIYN…VLDG, IYVA…SKSL, IDEK…YCEI, and ENVL…GGKK.

This Arabidopsis thaliana (Mouse-ear cress) protein is Putative F-box/kelch-repeat protein At5g38680.